The sequence spans 2697 residues: Target of rapamycin homolog (2697 aa).

Residues methionine 1–arginine 25 form a disordered region. HEAT repeat units follow at residues leucine 235–glutamine 272, glutamine 649–alanine 687, leucine 689–alanine 726, arginine 731–lysine 768, lysine 815–tyrosine 853, serine 863–lysine 900, and lysine 1073–cysteine 1110. One can recognise an FAT domain in the interval valine 1438–serine 2153. 2 disordered regions span residues threonine 1945–alanine 1981 and serine 2017–serine 2039. Residues serine 1969–alanine 1981 are compositionally biased toward pro residues. Polar residues predominate over residues proline 2030–serine 2039. Residues phenylalanine 2332–lysine 2647 form the PI3K/PI4K catalytic domain. The segment at valine 2338–arginine 2344 is G-loop. Residues glycine 2512–asparagine 2520 are catalytic loop. The tract at residues histidine 2532–threonine 2557 is activation loop. Positions aspartate 2615–serine 2635 are disordered. The FATC domain occupies glutamate 2665–tryptophan 2697.

This sequence belongs to the PI3/PI4-kinase family. Ubiquitous. Expressed in all major tissues and organs, including the intestine, gonads and hypodermal cells. Expressed in neurons.

It localises to the nucleus. The enzyme catalyses L-seryl-[protein] + ATP = O-phospho-L-seryl-[protein] + ADP + H(+). It catalyses the reaction L-threonyl-[protein] + ATP = O-phospho-L-threonyl-[protein] + ADP + H(+). Its function is as follows. Serine/threonine-protein kinase that regulates the mRNA translation machinery, probably by modulating the activity of translation factors such as eIF-4G and eIF-2. It may have some protein kinase activity instead of lipid kinase activity. May play a role in P-granule degradation by autophagy in somatic cells during embryogenesis. Required, during larval development, for the establishment of the proper number of germline progenitors, probably upstream of rsks-1 and ife-1. Required for larval development. May act as a mediator of lifespan regulation by insulin signaling and nutrient sensing. The protein is Target of rapamycin homolog of Caenorhabditis elegans.